The primary structure comprises 290 residues: Ribosomal RNA small subunit methyltransferase A (290 aa).

S-adenosyl-L-methionine-binding residues include Asn28, Leu30, Gly55, Glu76, Asp102, and Asn126.

The protein belongs to the class I-like SAM-binding methyltransferase superfamily. rRNA adenine N(6)-methyltransferase family. RsmA subfamily.

It is found in the cytoplasm. It catalyses the reaction adenosine(1518)/adenosine(1519) in 16S rRNA + 4 S-adenosyl-L-methionine = N(6)-dimethyladenosine(1518)/N(6)-dimethyladenosine(1519) in 16S rRNA + 4 S-adenosyl-L-homocysteine + 4 H(+). Specifically dimethylates two adjacent adenosines (A1518 and A1519) in the loop of a conserved hairpin near the 3'-end of 16S rRNA in the 30S particle. May play a critical role in biogenesis of 30S subunits. This Lachnoclostridium phytofermentans (strain ATCC 700394 / DSM 18823 / ISDg) (Clostridium phytofermentans) protein is Ribosomal RNA small subunit methyltransferase A.